Here is a 247-residue protein sequence, read N- to C-terminus: Probable transcriptional regulatory protein EUBELI_00902 (247 aa).

This sequence belongs to the TACO1 family.

It is found in the cytoplasm. This chain is Probable transcriptional regulatory protein EUBELI_00902, found in Lachnospira eligens (strain ATCC 27750 / DSM 3376 / VPI C15-48 / C15-B4) (Eubacterium eligens).